A 282-amino-acid chain; its full sequence is Nucleotide-binding protein Fnod_1159 (282 aa).

9 to 16 (GHSGAGKS) lines the ATP pocket. Residue 57 to 60 (DIRS) participates in GTP binding.

This sequence belongs to the RapZ-like family.

Functionally, displays ATPase and GTPase activities. The polypeptide is Nucleotide-binding protein Fnod_1159 (Fervidobacterium nodosum (strain ATCC 35602 / DSM 5306 / Rt17-B1)).